The following is a 102-amino-acid chain: MAGQAFRKFLPLFDRVLVERSAAETVTKGGIMLPEKSQGKVLQATVVAVGSGSKGKGGEIQPVSVKVGDKVLLPEYGGTKVVLDDKDYFLFRDGDILGKYVD.

At A2 the chain carries N-acetylalanine. K8 carries the post-translational modification N6-acetyllysine. Position 28 is an N6-succinyllysine (K28). K40 bears the N6-acetyllysine; alternate mark. N6-malonyllysine; alternate is present on residues K40, K54, and K56. K40, K54, K56, K66, and K70 each carry N6-succinyllysine; alternate. N6-acetyllysine; alternate occurs at positions 56, 66, and 70. At T79 the chain carries Phosphothreonine. An N6-acetyllysine; alternate mark is found at K80 and K86. K80 and K86 each carry N6-succinyllysine; alternate. The residue at position 99 (K99) is an N6-acetyllysine.

This sequence belongs to the GroES chaperonin family. Homoheptamer arranged in a ring structure. 2 heptameric Hsp10 rings interact with a Hsp60 tetradecamer in the structure of a back-to-back double heptameric ring to form the symmetrical football complex.

Its subcellular location is the mitochondrion matrix. Its function is as follows. Co-chaperonin implicated in mitochondrial protein import and macromolecular assembly. Together with Hsp60, facilitates the correct folding of imported proteins. May also prevent misfolding and promote the refolding and proper assembly of unfolded polypeptides generated under stress conditions in the mitochondrial matrix. The functional units of these chaperonins consist of heptameric rings of the large subunit Hsp60, which function as a back-to-back double ring. In a cyclic reaction, Hsp60 ring complexes bind one unfolded substrate protein per ring, followed by the binding of ATP and association with 2 heptameric rings of the co-chaperonin Hsp10. This leads to sequestration of the substrate protein in the inner cavity of Hsp60 where, for a certain period of time, it can fold undisturbed by other cell components. Synchronous hydrolysis of ATP in all Hsp60 subunits results in the dissociation of the chaperonin rings and the release of ADP and the folded substrate protein. The polypeptide is 10 kDa heat shock protein, mitochondrial (HSPE1) (Bos taurus (Bovine)).